Reading from the N-terminus, the 246-residue chain is Uridylate kinase (246 aa).

16–19 (KFSG) serves as a coordination point for ATP. Glycine 58 lines the UMP pocket. Residues glycine 59 and arginine 63 each contribute to the ATP site. Residues aspartate 78 and 139-146 (TGNPFFTT) each bind UMP. ATP contacts are provided by threonine 166, tyrosine 172, and aspartate 175.

Belongs to the UMP kinase family. As to quaternary structure, homohexamer.

The protein localises to the cytoplasm. The enzyme catalyses UMP + ATP = UDP + ADP. The protein operates within pyrimidine metabolism; CTP biosynthesis via de novo pathway; UDP from UMP (UMPK route): step 1/1. With respect to regulation, inhibited by UTP. In terms of biological role, catalyzes the reversible phosphorylation of UMP to UDP. This is Uridylate kinase from Legionella pneumophila (strain Corby).